The chain runs to 506 residues: Glycerol kinase (506 aa).

Thr-11 provides a ligand contact to ADP. Thr-11, Ser-12, and Ser-13 together coordinate ATP. Residue Thr-11 coordinates sn-glycerol 3-phosphate. Position 15 (Arg-15) interacts with ADP. Residues Arg-81, Glu-82, Tyr-133, and Asp-242 each coordinate sn-glycerol 3-phosphate. Residues Arg-81, Glu-82, Tyr-133, Asp-242, and Gln-243 each coordinate glycerol. ADP contacts are provided by Thr-264 and Gly-316. ATP-binding residues include Thr-264, Gly-316, Gln-320, and Gly-421. 2 residues coordinate ADP: Gly-421 and Asn-425.

It belongs to the FGGY kinase family.

It catalyses the reaction glycerol + ATP = sn-glycerol 3-phosphate + ADP + H(+). The protein operates within polyol metabolism; glycerol degradation via glycerol kinase pathway; sn-glycerol 3-phosphate from glycerol: step 1/1. With respect to regulation, inhibited by fructose 1,6-bisphosphate (FBP). Its function is as follows. Key enzyme in the regulation of glycerol uptake and metabolism. Catalyzes the phosphorylation of glycerol to yield sn-glycerol 3-phosphate. In Paracidovorax citrulli (strain AAC00-1) (Acidovorax citrulli), this protein is Glycerol kinase.